A 637-amino-acid chain; its full sequence is Sec1 family domain-containing protein 1 (637 aa).

Residues Ser32, Ser298, and Ser523 each carry the phosphoserine modification.

The protein belongs to the STXBP/unc-18/SEC1 family. In terms of assembly, interacts with STX17. Interacts with the COG complex via COG4. Interacts with STX5A. As to expression, highly expressed in testis. Detected at lower levels in brain, astrocytes, heart and small intestine.

The protein localises to the cytoplasm. The protein resides in the endoplasmic reticulum membrane. It is found in the golgi apparatus. It localises to the golgi stack membrane. In terms of biological role, plays a role in SNARE-pin assembly and Golgi-to-ER retrograde transport via its interaction with COG4. Involved in vesicular transport between the endoplasmic reticulum and the Golgi. This Rattus norvegicus (Rat) protein is Sec1 family domain-containing protein 1 (Scfd1).